A 573-amino-acid polypeptide reads, in one-letter code: Proline--tRNA ligase (573 aa).

The protein belongs to the class-II aminoacyl-tRNA synthetase family. ProS type 1 subfamily. Homodimer.

Its subcellular location is the cytoplasm. The catalysed reaction is tRNA(Pro) + L-proline + ATP = L-prolyl-tRNA(Pro) + AMP + diphosphate. Its function is as follows. Catalyzes the attachment of proline to tRNA(Pro) in a two-step reaction: proline is first activated by ATP to form Pro-AMP and then transferred to the acceptor end of tRNA(Pro). As ProRS can inadvertently accommodate and process non-cognate amino acids such as alanine and cysteine, to avoid such errors it has two additional distinct editing activities against alanine. One activity is designated as 'pretransfer' editing and involves the tRNA(Pro)-independent hydrolysis of activated Ala-AMP. The other activity is designated 'posttransfer' editing and involves deacylation of mischarged Ala-tRNA(Pro). The misacylated Cys-tRNA(Pro) is not edited by ProRS. In Citrifermentans bemidjiense (strain ATCC BAA-1014 / DSM 16622 / JCM 12645 / Bem) (Geobacter bemidjiensis), this protein is Proline--tRNA ligase.